The following is a 951-amino-acid chain: MLPLPSELQIQAQSIKQRFSELPAPPDLRDEDIAVLALSDFVSDMLLIHPQWLEELHQQPPQPQEWQYYSQWLSQALAGVQDEAALLTALRLFRRRVMVRIAWSQVLQTSGTAETLQQLSTLAESMIIAARDWLYQVCCRELGTPCNRQGVPQPLLILGMGKLGGGELNFSSDIDLIFAYPENGQTQGGRRELDNAQFFTRLGQRLIKALDQHTIDGFVYRVDMRLRPFGDSGPLVLSFAALEDYYQEQGRDWERYAMVKARLMGGADDPYSQELRQMLRPFVFRRYIDFSVIQSLRNMKGMIAREVRRRGLKDNIKLGAGGIREIEFITQVFQLIRGGREPRLQERALLPTLQAVAELGLLPEQQVADLSGSYLFLRRLENLLQAIADEQTQTLPNDPLNQARLAWGMGYADWAAMSTALENHMQAVRVVFDDLIGDETPDIGEDPSHGLYKSLWQDVLEESDLAPLTPHLEEAARRQLLATISGFRHDVDKRTIGPRGREVLDQLMPRLFAEVCPRPDANVALSRLILLLLSIVTRTTYLELLVEYHAALKHVIRLCSASPMVASQLARYPLLLDELLDPQSLYQPLAPSAYRDELRQYLLRVPEDDEEQQLEALRQFKQAQQLRIAAGDITEALPVMKVSDHLTYLAEAIIDAVIQQAWNQMVARYGQPSHLQQSEGRGFAVIGYGKLGGWELGYSSDLDLVFLLDCPLDVMTDGDRSIDGRQFYLRLAQRIMHLFSTRTSSGILYEVDARLRPSGEAGMLVSTIEAFADYQRNEAWTWEHQALVRARIVYGSPKLHQQFDAIRQQILCRHREDPQLQQEVREMREKMRNHLGSKQRDIFDIKADAGGITDIEFIAQYLVLRYAASEPRLTRWSDNVRIFESMAHYDIMSPEEAAALTRAYVTMRDEIHHLALQEQSSKVAADSFIAEREQVAASWHKWLAANDANVS.

The segment at 1–440 (MLPLPSELQI…VFDDLIGDET (440 aa)) is adenylyl removase. The adenylyl transferase stretch occupies residues 449–951 (HGLYKSLWQD…WLAANDANVS (503 aa)).

Belongs to the GlnE family. Mg(2+) serves as cofactor.

The catalysed reaction is [glutamine synthetase]-O(4)-(5'-adenylyl)-L-tyrosine + phosphate = [glutamine synthetase]-L-tyrosine + ADP. It catalyses the reaction [glutamine synthetase]-L-tyrosine + ATP = [glutamine synthetase]-O(4)-(5'-adenylyl)-L-tyrosine + diphosphate. In terms of biological role, involved in the regulation of glutamine synthetase GlnA, a key enzyme in the process to assimilate ammonia. When cellular nitrogen levels are high, the C-terminal adenylyl transferase (AT) inactivates GlnA by covalent transfer of an adenylyl group from ATP to specific tyrosine residue of GlnA, thus reducing its activity. Conversely, when nitrogen levels are low, the N-terminal adenylyl removase (AR) activates GlnA by removing the adenylyl group by phosphorolysis, increasing its activity. The regulatory region of GlnE binds the signal transduction protein PII (GlnB) which indicates the nitrogen status of the cell. The chain is Bifunctional glutamine synthetase adenylyltransferase/adenylyl-removing enzyme from Yersinia pestis bv. Antiqua (strain Antiqua).